Consider the following 348-residue polypeptide: ELAV-like protein 3 (348 aa).

RRM domains lie at 34–112 (TNLI…YARP), 120–200 (ANLY…FANN), and 265–343 (WCIF…FKTS).

Belongs to the RRM elav family. Expression is neural-specific in both embryos and adults. Expressed from neurula stage onwards in primary motor-, inter- and sensory-neurons. Expressed in the closing neural tube and motor neurons of stage 18 embryos, and primarily in the ventricular zone and dorsal region of the tailbud and adult brain. Expressed from stage 26 onwards in the differentiating ganglion cell layer of the retina, extending to the inner nuclear layer at later stages.

Its function is as follows. RNA-binding protein that binds to AU-rich element (ARE) sequences of target mRNAs. May also bind poly-A tracts via RRM 3. May be involved in neuronal differentiation and maintenance. This chain is ELAV-like protein 3 (elavl3), found in Xenopus laevis (African clawed frog).